The primary structure comprises 29 residues: Cytochrome b6-f complex subunit 8 (29 aa).

A helical membrane pass occupies residues 3–23 (IVSFAWAALMVVFTFSLSLVV).

Belongs to the PetN family. As to quaternary structure, the 4 large subunits of the cytochrome b6-f complex are cytochrome b6, subunit IV (17 kDa polypeptide, PetD), cytochrome f and the Rieske protein, while the 4 small subunits are PetG, PetL, PetM and PetN. The complex functions as a dimer.

The protein localises to the plastid. Its subcellular location is the chloroplast thylakoid membrane. Functionally, component of the cytochrome b6-f complex, which mediates electron transfer between photosystem II (PSII) and photosystem I (PSI), cyclic electron flow around PSI, and state transitions. The chain is Cytochrome b6-f complex subunit 8 from Phalaenopsis aphrodite subsp. formosana (Moth orchid).